The sequence spans 118 residues: MRSAKLKFEKRRSRIRHKISKTSNRVRLSIFKSGRHIYAQIIDDSKSITIAAASTLDEKIKKLKKSHCNIENAIKVGEEIAKKADSAGIKDVVFDRGGYKYHGVVKALADAAREKIKF.

Belongs to the universal ribosomal protein uL18 family. In terms of assembly, part of the 50S ribosomal subunit; part of the 5S rRNA/L5/L18/L25 subcomplex. Contacts the 5S and 23S rRNAs.

This is one of the proteins that bind and probably mediate the attachment of the 5S RNA into the large ribosomal subunit, where it forms part of the central protuberance. The protein is Large ribosomal subunit protein uL18 of Rickettsia conorii (strain ATCC VR-613 / Malish 7).